The sequence spans 89 residues: Acylphosphatase (89 aa).

Residues 4 to 89 (CVRCLIAGRV…IPEIQMFEVR (86 aa)) form the Acylphosphatase-like domain. Residues Arg-19 and Asn-37 contribute to the active site.

Belongs to the acylphosphatase family.

The catalysed reaction is an acyl phosphate + H2O = a carboxylate + phosphate + H(+). This Nitrosococcus oceani (strain ATCC 19707 / BCRC 17464 / JCM 30415 / NCIMB 11848 / C-107) protein is Acylphosphatase (acyP).